Here is a 588-residue protein sequence, read N- to C-terminus: Calcium/calmodulin-dependent protein kinase kinase 2 (588 aa).

The span at 1-14 (MSSCVSSQPSSNRA) shows a compositional bias: polar residues. Disordered stretches follow at residues 1–33 (MSSCVSSQPSSNRAAPQDELGGRGSSSSESQKP) and 78–100 (GQEVPLDTSGSQARPHLSGRKLS). Serine 2 is modified (N-acetylserine). Phosphoserine occurs at positions 100, 114, 129, 133, and 137. A compositionally biased stretch (low complexity) spans 128–139 (YSPVSSPQSSPR). The segment at 128 to 149 (YSPVSSPQSSPRLPRRPTVESH) is disordered. In terms of domain architecture, Protein kinase spans 165–446 (YTLKDEIGKG…VPEIKLHPWV (282 aa)). Residues 171-179 (IGKGSYGVV) and lysine 194 each bind ATP. The tract at residues 204-226 (QAGFPRRPPPRGTRPAPGGCIQP) is RP domain. The interval 205–225 (AGFPRRPPPRGTRPAPGGCIQ) is disordered. The Proton acceptor role is filled by aspartate 312. Residues 472 to 477 (ENSVKH) form an autoinhibitory domain region. The calmodulin-binding stretch occupies residues 475–500 (VKHIPSLATVILVKTMIRKRSFGNPF). Phosphoserine occurs at positions 479, 495, 511, 522, and 572. The segment at 497-588 (GNPFEGSRRE…LRPEEAMEPE (92 aa)) is disordered. A compositionally biased stretch (basic and acidic residues) spans 521 to 536 (PTRECESLSELKEARQ). Positions 579–588 (LRPEEAMEPE) are enriched in basic and acidic residues.

The protein belongs to the protein kinase superfamily. Ser/Thr protein kinase family. In terms of assembly, interacts with calmodulin. In terms of processing, autophosphorylated and phosphorylated by PKA. Each isoform may show a different pattern of phosphorylation. As to expression, ubiquitously expressed with higher levels in the brain. Intermediate levels are detected in spleen, prostate, thyroid and leukocytes. The lowest level is in lung.

It localises to the nucleus. The protein localises to the cytoplasm. It is found in the cell projection. Its subcellular location is the neuron projection. It catalyses the reaction L-seryl-[protein] + ATP = O-phospho-L-seryl-[protein] + ADP + H(+). The enzyme catalyses L-threonyl-[protein] + ATP = O-phospho-L-threonyl-[protein] + ADP + H(+). Its activity is regulated as follows. Activated by Ca(2+)/calmodulin. Binding of calmodulin may relieve intrasteric autoinhibition. Autophosphorylation does not alter activity or regulation by Ca(2+)/calmodulin. In part, activity is independent on Ca(2+)/calmodulin. Its function is as follows. Calcium/calmodulin-dependent protein kinase belonging to a proposed calcium-triggered signaling cascade involved in a number of cellular processes. Isoform 1, isoform 2 and isoform 3 phosphorylate CAMK1 and CAMK4. Isoform 3 phosphorylates CAMK1D. Isoform 4, isoform 5 and isoform 6 lacking part of the calmodulin-binding domain are inactive. Efficiently phosphorylates 5'-AMP-activated protein kinase (AMPK) trimer, including that consisting of PRKAA1, PRKAB1 and PRKAG1. This phosphorylation is stimulated in response to Ca(2+) signals. Seems to be involved in hippocampal activation of CREB1. May play a role in neurite growth. Isoform 3 may promote neurite elongation, while isoform 1 may promoter neurite branching. In Homo sapiens (Human), this protein is Calcium/calmodulin-dependent protein kinase kinase 2 (CAMKK2).